A 44-amino-acid polypeptide reads, in one-letter code: Viresin (44 aa).

It belongs to the insect A10/OS-D protein family.

It is found in the secreted. Its function is as follows. Has antibacterial activity against the Gram-negative bacteria E.coli and E.cloacae, but not against the Gram-negative bacteria P.aeruginosa, P.vulgaris, K.pneumoniae and S.enteritidis or the Gram-positive bacteria S.aureus, S.epidermidis and S.salivarius. This Heliothis virescens (Tobacco budworm moth) protein is Viresin.